The sequence spans 419 residues: UDP-N-acetylglucosamine 1-carboxyvinyltransferase (419 aa).

Residue 22 to 23 coordinates phosphoenolpyruvate; that stretch reads KN. A UDP-N-acetyl-alpha-D-glucosamine-binding site is contributed by Arg-91. Catalysis depends on Cys-115, which acts as the Proton donor. 2-(S-cysteinyl)pyruvic acid O-phosphothioketal is present on Cys-115. UDP-N-acetyl-alpha-D-glucosamine-binding positions include 120–124, 160–163, Asp-305, and Ile-327; these read RPVDL and KVSV.

It belongs to the EPSP synthase family. MurA subfamily.

Its subcellular location is the cytoplasm. The enzyme catalyses phosphoenolpyruvate + UDP-N-acetyl-alpha-D-glucosamine = UDP-N-acetyl-3-O-(1-carboxyvinyl)-alpha-D-glucosamine + phosphate. It participates in cell wall biogenesis; peptidoglycan biosynthesis. Cell wall formation. Adds enolpyruvyl to UDP-N-acetylglucosamine. The sequence is that of UDP-N-acetylglucosamine 1-carboxyvinyltransferase from Sodalis glossinidius (strain morsitans).